The chain runs to 366 residues: tRNA 2-selenouridine synthase (366 aa).

In terms of domain architecture, Rhodanese spans 12–135 (FLNDVPMMDA…MRTFLLDTLH (124 aa)). The S-selanylcysteine intermediate role is filled by Cys95.

It belongs to the SelU family. Monomer.

It carries out the reaction 5-methylaminomethyl-2-thiouridine(34) in tRNA + selenophosphate + (2E)-geranyl diphosphate + H2O + H(+) = 5-methylaminomethyl-2-selenouridine(34) in tRNA + (2E)-thiogeraniol + phosphate + diphosphate. It catalyses the reaction 5-methylaminomethyl-2-thiouridine(34) in tRNA + (2E)-geranyl diphosphate = 5-methylaminomethyl-S-(2E)-geranyl-thiouridine(34) in tRNA + diphosphate. The enzyme catalyses 5-methylaminomethyl-S-(2E)-geranyl-thiouridine(34) in tRNA + selenophosphate + H(+) = 5-methylaminomethyl-2-(Se-phospho)selenouridine(34) in tRNA + (2E)-thiogeraniol. The catalysed reaction is 5-methylaminomethyl-2-(Se-phospho)selenouridine(34) in tRNA + H2O = 5-methylaminomethyl-2-selenouridine(34) in tRNA + phosphate. Its function is as follows. Involved in the post-transcriptional modification of the uridine at the wobble position (U34) of tRNA(Lys), tRNA(Glu) and tRNA(Gln). Catalyzes the conversion of 2-thiouridine (S2U-RNA) to 2-selenouridine (Se2U-RNA). Acts in a two-step process involving geranylation of 2-thiouridine (S2U) to S-geranyl-2-thiouridine (geS2U) and subsequent selenation of the latter derivative to 2-selenouridine (Se2U) in the tRNA chain. The protein is tRNA 2-selenouridine synthase of Pseudomonas syringae pv. syringae (strain B728a).